Consider the following 223-residue polypeptide: Voltage-dependent calcium channel gamma-1 subunit (223 aa).

Residues 1–10 lie on the Cytoplasmic side of the membrane; the sequence is MSQTKTAKVR. A helical transmembrane segment spans residues 11–29; the sequence is VTLFFILVGGVLAMVAVVT. Residues 30-109 lie on the Extracellular side of the membrane; it reads DHWAVLSPHL…TQKEYSISAA (80 aa). N-linked (GlcNAc...) asparagine glycans are attached at residues N43 and N80. C57 and C81 are joined by a disulfide. Residues 110–130 traverse the membrane as a helical segment; sequence AIAIFSLGFIIVGSICAFLSF. The Cytoplasmic segment spans residues 131-135; sequence GNKRD. The chain crosses the membrane as a helical span at residues 136–156; the sequence is YLLRPASMFYAFAGLCLIVSV. The Extracellular portion of the chain corresponds to 157–180; that stretch reads EVMRQSVKRMIDSEDTVWIEHYYS. Residues 181–205 form a helical membrane-spanning segment; it reads WSFACACAAFILLFLGGLFLLLFSL. Residues 206-223 are Cytoplasmic-facing; the sequence is PRMPQNPWESCMDAEPEH.

It belongs to the PMP-22/EMP/MP20 family. CACNG subfamily. In terms of assembly, component of a calcium channel complex consisting of a pore-forming alpha subunit (CACNA1S) and the ancillary subunits CACNB1 or CACNB2, CACNG1 and CACNA2D1. The channel complex contains alpha, beta, gamma and delta subunits in a 1:1:1:1 ratio, i.e. it contains either CACNB1 or CACNB2. N-glycosylated. As to expression, detected in skeletal muscle (at protein level).

Its subcellular location is the cell membrane. It localises to the sarcolemma. Regulatory subunit of the voltage-gated calcium channel that gives rise to L-type calcium currents in skeletal muscle. Regulates channel inactivation kinetics. In Mus musculus (Mouse), this protein is Voltage-dependent calcium channel gamma-1 subunit (Cacng1).